We begin with the raw amino-acid sequence, 59 residues long: MLSWALIFFIIAIIAAAFGFGGIAVAAAGIAKILFFLFLVMFVIFLIMGLLGRRGPPPV.

2 helical membrane-spanning segments follow: residues 5–25 (ALIF…GIAV) and 30–50 (IAKI…IMGL).

Belongs to the UPF0391 family.

It is found in the cell membrane. In Legionella pneumophila subsp. pneumophila (strain Philadelphia 1 / ATCC 33152 / DSM 7513), this protein is UPF0391 membrane protein lpg2521.